We begin with the raw amino-acid sequence, 376 residues long: Small RNA 2'-O-methyltransferase (376 aa).

Residues Thr49, Asp67, and Ser103 each coordinate S-adenosyl-L-methionine. Positions 121, 124, 125, and 171 each coordinate Mg(2+).

It belongs to the methyltransferase superfamily. HEN1 family. The cofactor is Mg(2+).

The protein localises to the cytoplasm. It carries out the reaction small RNA 3'-end nucleotide + S-adenosyl-L-methionine = small RNA 3'-end 2'-O-methylnucleotide + S-adenosyl-L-homocysteine + H(+). Functionally, methyltransferase that adds a 2'-O-methyl group at the 3'-end of piRNAs, a class of 24 to 30 nucleotide RNAs that are generated by a Dicer-independent mechanism and are primarily derived from transposons and other repeated sequence elements. This probably protects the 3'-end of piRNAs from uridylation activity and subsequent degradation. Stabilization of piRNAs is essential for gametogenesis. This chain is Small RNA 2'-O-methyltransferase (HENMT1), found in Gallus gallus (Chicken).